The chain runs to 78 residues: Major outer membrane lipoprotein Lpp (78 aa).

Residues 1–20 (MNRTKLVLGAVILGSTLLAG) form the signal peptide. Cysteine 21 carries the N-palmitoyl cysteine lipid modification. Residue cysteine 21 is the site of S-diacylglycerol cysteine attachment. A coiled-coil region spans residues 22-75 (SSNAKIDQLSTDVQTLNAKVDQLSNDVTAIRSDVQAAKDDAARANQRLDNQAHS). 2 repeats span residues 24–34 (NAKIDQLSTDV) and 38–48 (NAKVDQLSNDV). Lysine 78 is subject to N6-murein peptidoglycan lysine.

This sequence belongs to the Lpp family. In terms of assembly, homotrimer.

The protein localises to the cell outer membrane. Its subcellular location is the secreted. It localises to the cell wall. Its function is as follows. A highly abundant outer membrane lipoprotein that controls the distance between the inner and outer membranes. The only protein known to be covalently linked to the peptidoglycan network (PGN). Also non-covalently binds the PGN. The link between the cell outer membrane and PGN contributes to maintenance of the structural and functional integrity of the cell envelope, and maintains the correct distance between the PGN and the outer membrane. The protein is Major outer membrane lipoprotein Lpp of Erwinia amylovora (Fire blight bacteria).